Here is a 260-residue protein sequence, read N- to C-terminus: Flavin-dependent thymidylate synthase (260 aa).

A ThyX domain is found at 2–203 (ISVKLVSYTN…PRLFKYTGPN (202 aa)). FAD contacts are provided by residues serine 56, 80–82 (RHR), and glutamine 88. DUMP contacts are provided by residues 77–80 (QLVR), 88–92 (QMSHR), and arginine 142. Positions 80 to 90 (RHRIASYTQMS) match the ThyX motif motif. Residues 158-160 (NAR) and asparagine 164 contribute to the FAD site. Arginine 169 contacts dUMP. Catalysis depends on arginine 169, which acts as the Involved in ionization of N3 of dUMP, leading to its activation.

The protein belongs to the thymidylate synthase ThyX family. As to quaternary structure, homotetramer. Requires FAD as cofactor.

It carries out the reaction dUMP + (6R)-5,10-methylene-5,6,7,8-tetrahydrofolate + NADPH + H(+) = dTMP + (6S)-5,6,7,8-tetrahydrofolate + NADP(+). The protein operates within pyrimidine metabolism; dTTP biosynthesis. Functionally, catalyzes the reductive methylation of 2'-deoxyuridine-5'-monophosphate (dUMP) to 2'-deoxythymidine-5'-monophosphate (dTMP) while utilizing 5,10-methylenetetrahydrofolate (mTHF) as the methyl donor, and NADPH and FADH(2) as the reductant. This Saccharolobus solfataricus (strain ATCC 35092 / DSM 1617 / JCM 11322 / P2) (Sulfolobus solfataricus) protein is Flavin-dependent thymidylate synthase.